A 473-amino-acid chain; its full sequence is Catalase easC (473 aa).

The span at 1–15 shows a compositional bias: low complexity; it reads MASEVSVASSGSEHS. The segment at 1-31 is disordered; it reads MASEVSVASSGSEHSGAQKCPFQDPGLSSMD. His-54 is a catalytic residue. Tyr-344 provides a ligand contact to heme. The disordered stretch occupies residues 369 to 388; the sequence is DGARPEKAEMAPQKVPSQEH.

It belongs to the catalase family. Heme serves as cofactor.

The protein operates within alkaloid biosynthesis; ergot alkaloid biosynthesis. Functionally, catalase; part of the gene cluster that mediates the biosynthesis of fungal ergot alkaloid. DmaW catalyzes the first step of ergot alkaloid biosynthesis by condensing dimethylallyl diphosphate (DMAP) and tryptophan to form 4-dimethylallyl-L-tryptophan. The second step is catalyzed by the methyltransferase easF that methylates 4-dimethylallyl-L-tryptophan in the presence of S-adenosyl-L-methionine, resulting in the formation of 4-dimethylallyl-L-abrine. The catalase easC and the FAD-dependent oxidoreductase easE then transform 4-dimethylallyl-L-abrine to chanoclavine-I which is further oxidized by easD in the presence of NAD(+), resulting in the formation of chanoclavine-I aldehyde. Agroclavine dehydrogenase easG then mediates the conversion of chanoclavine-I aldehyde to agroclavine via a non-enzymatic adduct reaction: the substrate is an iminium intermediate that is formed spontaneously from chanoclavine-I aldehyde in the presence of glutathione. The presence of easA is not required to complete this reaction. Further conversion of agroclavine to paspalic acid is a two-step process involving oxidation of agroclavine to elymoclavine and of elymoclavine to paspalic acid, the second step being performed by the elymoclavine oxidase cloA. Paspalic acid is then further converted to D-lysergic acid. Ergopeptines are assembled from D-lysergic acid and three different amino acids by the D-lysergyl-peptide-synthetases composed each of a monomudular and a trimodular nonribosomal peptide synthetase subunit. LpsB and lpsC encode the monomodular subunits responsible for D-lysergic acid activation and incorporation into the ergopeptine backbone. LpsA1 and A2 subunits encode the trimodular nonribosomal peptide synthetase assembling the tripeptide portion of ergopeptines. LpsA1 is responsible for formation of the major ergopeptine, ergotamine, and lpsA2 for alpha-ergocryptine, the minor ergopeptine of the total alkaloid mixture elaborated by C.purpurea. D-lysergyl-tripeptides are assembled by the nonribosomal peptide synthetases and released as N-(D-lysergyl-aminoacyl)-lactams. Cyclolization of the D-lysergyl-tripeptides is performed by the Fe(2+)/2-ketoglutarate-dependent dioxygenase easH which introduces a hydroxyl group into N-(D-lysergyl-aminoacyl)-lactam at alpha-C of the aminoacyl residue followed by spontaneous condensation with the terminal lactam carbonyl group. The protein is Catalase easC of Claviceps purpurea (Ergot fungus).